We begin with the raw amino-acid sequence, 243 residues long: MNASQDTIYAQASEHISDFQFDNRVAGVFSDMIRRSVPGYTQIINTIGDFADRFVKPNTQVYDLGCSLGAATLSIRRQIQGRDCRIIAVDNSESMVTRCQENLSAYVSDTEVELICGDIRDIHIENASLVVLNFTLQFLPPEDREALIAKIYYGLNPGGLLVLSEKIRFDDAPIQSVLEELHLDFKRANGYSELEISQKRSALENVMKPDTLSIHQQRLTGQGFSHFSLWFQCFNFSSMVAIK.

S-adenosyl-L-methionine contacts are provided by residues tyrosine 40, 65 to 67 (GCS), 90 to 91 (DN), 118 to 119 (DI), asparagine 133, and arginine 200.

It belongs to the class I-like SAM-binding methyltransferase superfamily. Cx-SAM synthase family. Homodimer.

The catalysed reaction is prephenate + S-adenosyl-L-methionine = carboxy-S-adenosyl-L-methionine + 3-phenylpyruvate + H2O. Functionally, catalyzes the conversion of S-adenosyl-L-methionine (SAM) to carboxy-S-adenosyl-L-methionine (Cx-SAM). This is Carboxy-S-adenosyl-L-methionine synthase from Shewanella sp. (strain MR-7).